The primary structure comprises 214 residues: Melanoregulin (214 aa).

Positions 162–172 (LSERYLLVVDR) match the Cholesterol-binding sequence motif motif. Residue serine 213 is modified to Phosphoserine.

This sequence belongs to the melanoregulin family. As to quaternary structure, identified in a complex with RILP and DCTN1; interacts directly with RILP, but does not interact directly with DCTN1. Interacts with PRPH2. Post-translationally, palmitoylated. Palmitoylation is required to maintain the protein at the melanosome membrane. In terms of tissue distribution, detected in melanocytes. Expressed in retina, in retinal pigment epithelium (at protein level). Widely expressed with higher expression in skin, heart, liver, testis and thymus. Detected in retina, in retinal pigment epithelium cells.

It is found in the apical cell membrane. The protein resides in the melanosome membrane. The protein localises to the lysosome membrane. It localises to the cytoplasmic vesicle membrane. Probably functions as a cargo-recognition protein that couples cytoplasmic vesicles to the transport machinery. Plays a role in hair pigmentation, a process that involves shedding of melanosome-containing vesicles from melanocytes, followed by phagocytosis of the melanosome-containing vesicles by keratinocytes. Functions on melanosomes as receptor for RILP and the complex formed by RILP and DCTN1, and thereby contributes to retrograde melanosome transport from the cell periphery to the center. Overexpression causes accumulation of late endosomes and/or lysosomes at the microtubule organising center (MTOC) at the center of the cell. Probably binds cholesterol and requires the presence of cholesterol in membranes to function in microtubule-mediated retrograde organelle transport. Binds phosphatidylinositol 3-phosphate, phosphatidylinositol 4-phosphate, phosphatidylinositol 5-phosphate and phosphatidylinositol 3,5-bisphosphate, but not phosphatidylinositol 3,4-bisphosphate or phosphatidylinositol 4,5-bisphosphate. Required for normal phagosome clearing and normal activation of lysosomal enzymes in lysosomes from retinal pigment epithelium cells. Required for normal degradation of the lipofuscin component N-retinylidene-N-retinylethanolamine (A2E) in the eye. May function in membrane fusion and regulate the biogenesis of disk membranes of photoreceptor rod cells. The sequence is that of Melanoregulin (Mreg) from Mus musculus (Mouse).